The primary structure comprises 676 residues: Symportin 1 (676 aa).

A compositionally biased stretch (basic residues) spans 1–10 (MGKTRRNRVR). Positions 1 to 28 (MGKTRRNRVRNRTDPIAKPVKPPTDPEL) are disordered. The ARM 1 repeat unit spans residues 183-216 (TILRLLFRLISADIAPQDIYEEAISCLTTLSEDN). Residues 325–385 (KGNQGSRESP…EDDEDDDDDS (61 aa)) are disordered. 2 stretches are compositionally biased toward acidic residues: residues 338–354 (ADEE…DAMD) and 363–385 (EDQE…DDDS). An ARM 2 repeat occupies 420 to 453 (TAVPQLIRLSNLPIDSDESLTIQSHALSALNNIS).

Belongs to the nuclear import and ribosome assembly adapter family. Component of a hexameric 5S RNP precursor complex, composed of 5S RNA, RRS1, RPF2, RPL5, RPL11 and SYO1; this complex acts as a precursor for ribosome assembly.

Involved in ribosomal large subunit assembly. This is Symportin 1 from Chaetomium thermophilum (strain DSM 1495 / CBS 144.50 / IMI 039719) (Thermochaetoides thermophila).